A 278-amino-acid chain; its full sequence is Endoplasmic reticulum junction formation protein lunapark (278 aa).

At 1 to 45 the chain is on the cytoplasmic side; that stretch reads MFSALGKWVRGSRNDKDFVTKYTADLSQITSQIHQLDVALKKSQS. The helical transmembrane segment at 46-66 threads the bilayer; it reads ILSQWQSNLTFYGIALTVLAL. The Lumenal segment spans residues 67-77; the sequence is SYTYWEYHGYR. Residues 78–98 form a helical membrane-spanning segment; it reads PYLVVTALLCIGSLILFKWAL. Residues 99–278 lie on the Cytoplasmic side of the membrane; it reads TKLYAFYNNN…PSQSEKEKTK (180 aa). The stretch at 107–183 forms a coiled coil; sequence NNRLRKLAKL…ELEKFKKESH (77 aa). The C4-type; plays a role in ER morphology zinc-finger motif lies at 223-247; that stretch reads CPQCHWKSNCYRLASKPIIFICPHC. Residues 258 to 278 are disordered; that stretch reads EDAIEAKQPAQPSQSEKEKTK.

It belongs to the lunapark family. As to quaternary structure, interacts with RTN1; this interaction is negatively regulated by SEY1. Interacts with SEY1 and YOP1.

It is found in the endoplasmic reticulum membrane. Functionally, plays a role in tubular endoplasmic reticulum network formation and maintenance. Works in conjunction with the ER shaping proteins (reticulons RTN1 and RTN2, YOP1), and in antagonism to SEY1 to maintain the network in a dynamic equilibrium. May counterbalance SEY1-directed polygon formation by promoting polygon loss through ring closure. This chain is Endoplasmic reticulum junction formation protein lunapark (LNP1), found in Saccharomyces cerevisiae (strain ATCC 204508 / S288c) (Baker's yeast).